Consider the following 315-residue polypeptide: Ribosomal RNA small subunit methyltransferase H (315 aa).

S-adenosyl-L-methionine-binding positions include 37-39 (GGH), Asp57, Phe83, Asp105, and Gln112.

The protein belongs to the methyltransferase superfamily. RsmH family.

The protein resides in the cytoplasm. The enzyme catalyses cytidine(1402) in 16S rRNA + S-adenosyl-L-methionine = N(4)-methylcytidine(1402) in 16S rRNA + S-adenosyl-L-homocysteine + H(+). Its function is as follows. Specifically methylates the N4 position of cytidine in position 1402 (C1402) of 16S rRNA. The polypeptide is Ribosomal RNA small subunit methyltransferase H (Pseudomonas putida (strain ATCC 47054 / DSM 6125 / CFBP 8728 / NCIMB 11950 / KT2440)).